The chain runs to 636 residues: Rust resistance kinase Lr10 (636 aa).

An N-terminal signal peptide occupies residues 1–24 (MSKLLVIALLLLPLINHGIYLATA). The Extracellular portion of the chain corresponds to 25–276 (WDDQDFFKYC…MPDPHGSHIK (252 aa)). N-linked (GlcNAc...) asparagine glycosylation is found at N56, N177, and N222. Residues 277 to 297 (VIAATSSVAAFVALLLTVATV) form a helical membrane-spanning segment. The Cytoplasmic segment spans residues 298-636 (LYLSLKTRYN…FVSSENELMS (339 aa)). The Protein kinase domain occupies 339 to 628 (RRFKEKVGQG…SLQMPPKPFV (290 aa)). ATP is bound by residues 345–353 (VGQGGFGSV) and K367. D466 acts as the Proton acceptor in catalysis.

This sequence belongs to the protein kinase superfamily. Ser/Thr protein kinase family. In terms of tissue distribution, specifically expressed in the aerial parts of the plant.

The protein localises to the cell membrane. The enzyme catalyses L-seryl-[protein] + ATP = O-phospho-L-seryl-[protein] + ADP + H(+). The catalysed reaction is L-threonyl-[protein] + ATP = O-phospho-L-threonyl-[protein] + ADP + H(+). In Triticum aestivum (Wheat), this protein is Rust resistance kinase Lr10.